Here is a 471-residue protein sequence, read N- to C-terminus: Cysteine--tRNA ligase (471 aa).

Cys29 serves as a coordination point for Zn(2+). The 'HIGH' region signature appears at Pro31 to Asn41. Zn(2+)-binding residues include Cys212, His237, and Glu241. The short motif at Lys269–Ser273 is the 'KMSKS' region element. Lys272 contacts ATP.

Belongs to the class-I aminoacyl-tRNA synthetase family. As to quaternary structure, monomer. Zn(2+) is required as a cofactor.

The protein localises to the cytoplasm. The enzyme catalyses tRNA(Cys) + L-cysteine + ATP = L-cysteinyl-tRNA(Cys) + AMP + diphosphate. This is Cysteine--tRNA ligase from Symbiobacterium thermophilum (strain DSM 24528 / JCM 14929 / IAM 14863 / T).